Consider the following 707-residue polypeptide: Serine/threonine protein kinase UL97 (707 aa).

Low complexity predominate over residues 1-14 (MSSALRSRARSASL). Disordered stretches follow at residues 1-32 (MSSA…PSRA), 115-146 (EKED…GDGY), 176-199 (FTGG…PLRP), and 231-264 (ESQD…EADS). A compositionally biased stretch (basic and acidic residues) spans 115 to 127 (EKEDAASDKENLR). The segment covering 178 to 188 (GGSDPSDSVSG) has biased composition (low complexity). ATP contacts are provided by residues 337–345 (LGQGSFGEV) and Lys359. Asp456 acts as the Proton acceptor in catalysis.

This sequence belongs to the protein kinase superfamily. Tyr protein kinase family. HCMV ganciclovir subfamily. As to quaternary structure, interacts with UL83. Autophosphorylates on serine and threonine residues.

It localises to the virion. The catalysed reaction is L-seryl-[protein] + ATP = O-phospho-L-seryl-[protein] + ADP + H(+). It carries out the reaction L-threonyl-[protein] + ATP = O-phospho-L-threonyl-[protein] + ADP + H(+). In terms of biological role, serine/threonine protein kinase that plays important roles in several processes including nuclear viral egress, viral replication or regulation of host cell cycle progression. Participates in the acquisition of tegument during virion morphogenesis in the nucleus. Redistributes the host nuclear lamina by phosphorylating cellular Lamins-A/C. Plays a role in viral DNA synthesis by phosphorylating the DNA polymerase processivity factor UL44. Stimulates host cell cycle to support viral DNA synthesis by phosphorylating host retinoblastoma/RB1 protein. Additional substrates have been identified including host EF1D or H2B. Also phosphorylates host SAMHD1 and thereby counteracts its antiviral effect by reducing its dNTP hydrolase activity. This is Serine/threonine protein kinase UL97 (UL97) from Human cytomegalovirus (strain Towne) (HHV-5).